We begin with the raw amino-acid sequence, 389 residues long: BTB/POZ domain-containing protein KCTD9 (389 aa).

The KHA domain occupies 3 to 82 (RVTLFLNGSP…PQTDSKPPEG (80 aa)). S11 is modified (phosphoserine). The BTB domain occupies 89-161 (DWLTLNVGGR…LRHGQLIVND (73 aa)). Pentapeptide repeat domains lie at 224–256 (NFSG…ANLC), 258–297 (ANLE…NFED), and 338–376 (CNLR…AIFE).

As to quaternary structure, forms pentamers. Component of a complex composed of 5 subunits of KCTD9 and 5 CUL3.

The protein operates within protein modification; protein ubiquitination. Substrate-specific adapter of a BCR (BTB-CUL3-RBX1) E3 ubiquitin-protein ligase complex, which mediates the ubiquitination of target proteins, leading to their degradation by the proteasome. This Homo sapiens (Human) protein is BTB/POZ domain-containing protein KCTD9 (KCTD9).